A 419-amino-acid polypeptide reads, in one-letter code: L-rhamnose isomerase (419 aa).

Mn(2+) contacts are provided by His-262, Asp-294, and Asp-296.

This sequence belongs to the rhamnose isomerase family. In terms of assembly, homotetramer. The cofactor is Mn(2+).

The protein resides in the cytoplasm. It catalyses the reaction L-rhamnopyranose = L-rhamnulose. It participates in carbohydrate degradation; L-rhamnose degradation; glycerone phosphate from L-rhamnose: step 1/3. In terms of biological role, catalyzes the interconversion of L-rhamnose and L-rhamnulose. The polypeptide is L-rhamnose isomerase (Escherichia coli (strain 55989 / EAEC)).